Reading from the N-terminus, the 429-residue chain is Serine--tRNA ligase (429 aa).

229 to 231 (TAE) provides a ligand contact to L-serine. ATP is bound at residue 260–262 (RSE). Glu283 lines the L-serine pocket. Residue 347-350 (EISS) participates in ATP binding. L-serine is bound at residue Ser383.

This sequence belongs to the class-II aminoacyl-tRNA synthetase family. Type-1 seryl-tRNA synthetase subfamily. As to quaternary structure, homodimer. The tRNA molecule binds across the dimer.

The protein resides in the cytoplasm. The catalysed reaction is tRNA(Ser) + L-serine + ATP = L-seryl-tRNA(Ser) + AMP + diphosphate + H(+). The enzyme catalyses tRNA(Sec) + L-serine + ATP = L-seryl-tRNA(Sec) + AMP + diphosphate + H(+). It participates in aminoacyl-tRNA biosynthesis; selenocysteinyl-tRNA(Sec) biosynthesis; L-seryl-tRNA(Sec) from L-serine and tRNA(Sec): step 1/1. Its function is as follows. Catalyzes the attachment of serine to tRNA(Ser). Is also able to aminoacylate tRNA(Sec) with serine, to form the misacylated tRNA L-seryl-tRNA(Sec), which will be further converted into selenocysteinyl-tRNA(Sec). The sequence is that of Serine--tRNA ligase from Orientia tsutsugamushi (strain Ikeda) (Rickettsia tsutsugamushi).